Reading from the N-terminus, the 209-residue chain is PF03932 family protein CutC (209 aa).

It is found in the cytoplasm. In Streptococcus pyogenes serotype M6 (strain ATCC BAA-946 / MGAS10394), this protein is PF03932 family protein CutC.